The chain runs to 268 residues: Shikimate dehydrogenase (NADP(+)) (268 aa).

Shikimate is bound by residues 13 to 15 and Thr-60; that span reads SLS. The Proton acceptor role is filled by Lys-64. Glu-76 is an NADP(+) binding site. Residues Asn-85 and Asp-100 each contribute to the shikimate site. NADP(+)-binding positions include 124 to 128, 148 to 153, and Ile-209; these read GAGGA and NRTMAR. Shikimate is bound at residue Tyr-211. Position 232 (Gly-232) interacts with NADP(+).

This sequence belongs to the shikimate dehydrogenase family. In terms of assembly, homodimer.

It catalyses the reaction shikimate + NADP(+) = 3-dehydroshikimate + NADPH + H(+). The protein operates within metabolic intermediate biosynthesis; chorismate biosynthesis; chorismate from D-erythrose 4-phosphate and phosphoenolpyruvate: step 4/7. In terms of biological role, involved in the biosynthesis of the chorismate, which leads to the biosynthesis of aromatic amino acids. Catalyzes the reversible NADPH linked reduction of 3-dehydroshikimate (DHSA) to yield shikimate (SA). The sequence is that of Shikimate dehydrogenase (NADP(+)) from Staphylococcus aureus (strain JH1).